We begin with the raw amino-acid sequence, 137 residues long: Small ribosomal subunit protein uS9 (137 aa).

This sequence belongs to the universal ribosomal protein uS9 family.

In Picosynechococcus sp. (strain ATCC 27264 / PCC 7002 / PR-6) (Agmenellum quadruplicatum), this protein is Small ribosomal subunit protein uS9.